The chain runs to 466 residues: F-box/LRR-repeat protein fbxl-1 (466 aa).

The F-box domain occupies 54–100 (SLINRVLPKEVLLKVFSFLDTKALCRSAQVCRSWSILALDGSNWQRV). LRR repeat units lie at residues 122-147 (GGFLKELSLKGCENVHDSALRTFTSR), 148-173 (CPNLEHLSLYRCKRVTDASCENLGRY), 174-199 (CHKLNYLNLENCSSITDRAMKYIGDG), 200-225 (CPNLSYLNISWCDAIQDRGVQIILSN), 226-251 (CKSLDTLILRGCEGLTENVFGSVEAH), 252-277 (MGAIKKLNLLQCFQLTDITVQNIANG), 278-303 (ATALEYLCMSNCNQISDRSLVSLGQH), 304-329 (SHNLKVLELSGCTLLGDNGFIPLARG), 330-355 (CRQLERLDMEDCSLISDHTINSLANN), 356-381 (CTALRELSLSHCELITDESIQNLASK), and 408-433 (CKALKRIDLYDCQNVSKEAIVRFQHH).

Component of the SCF (SKP1-CUL1-F-box protein)-type E3 ubiquitin ligase complex. As to expression, expressed in neuroglial cells such as the socket cell and sheath cell, neurosecretory motor neurons and regions around the pharynx and anus.

The protein localises to the perikaryon. It is found in the cell projection. Its subcellular location is the dendrite. The protein resides in the cilium. It localises to the axon. In terms of biological role, substrate-recognition component of the SCF (SKP1-CUL1-F-box protein)-type E3 ubiquitin ligase complex. Plays a role in regulating the entry into the dauer state. In hermaphrodites, may play a role in modulating the rate of defecation. The sequence is that of F-box/LRR-repeat protein fbxl-1 from Caenorhabditis elegans.